Here is a 251-residue protein sequence, read N- to C-terminus: Cell division protein ZapD (251 aa).

Belongs to the ZapD family. In terms of assembly, interacts with FtsZ.

It localises to the cytoplasm. Cell division factor that enhances FtsZ-ring assembly. Directly interacts with FtsZ and promotes bundling of FtsZ protofilaments, with a reduction in FtsZ GTPase activity. This Burkholderia cenocepacia (strain ATCC BAA-245 / DSM 16553 / LMG 16656 / NCTC 13227 / J2315 / CF5610) (Burkholderia cepacia (strain J2315)) protein is Cell division protein ZapD.